The following is a 429-amino-acid chain: Trigger factor (429 aa).

The PPIase FKBP-type domain maps to 161-246 (GDRLSIDFKG…INEVALPKEP (86 aa)).

This sequence belongs to the FKBP-type PPIase family. Tig subfamily.

It localises to the cytoplasm. The enzyme catalyses [protein]-peptidylproline (omega=180) = [protein]-peptidylproline (omega=0). Its function is as follows. Involved in protein export. Acts as a chaperone by maintaining the newly synthesized protein in an open conformation. Functions as a peptidyl-prolyl cis-trans isomerase. This chain is Trigger factor, found in Ruthia magnifica subsp. Calyptogena magnifica.